Here is a 106-residue protein sequence, read N- to C-terminus: Biogenesis of lysosome-related organelles complex 1 subunit BLS1 (106 aa).

It belongs to the BLOC1S1 family. As to quaternary structure, component of the biogenesis of lysosome-related organelles complex-1 (BLOC-1).

The protein resides in the endosome. Functionally, component of the biogenesis of lysosome-related organelles complex-1 (BLOC-1), a complex involved in endosomal cargo sorting. This chain is Biogenesis of lysosome-related organelles complex 1 subunit BLS1 (BLS1), found in Candida glabrata (strain ATCC 2001 / BCRC 20586 / JCM 3761 / NBRC 0622 / NRRL Y-65 / CBS 138) (Yeast).